Reading from the N-terminus, the 240-residue chain is NAD(P)H-hydrate epimerase (240 aa).

Residues 15–224 (AQEIDAELMG…SYNLKLPCYP (210 aa)) enclose the YjeF N-terminal domain. Position 66-70 (66-70 (NQGGD)) interacts with (6S)-NADPHX. Gln-67 and Asp-129 together coordinate K(+). (6S)-NADPHX-binding positions include 133–139 (GFSFHSE) and Asp-162. Ser-165 provides a ligand contact to K(+).

The protein belongs to the NnrE/AIBP family. The cofactor is K(+).

It is found in the cytoplasm. It localises to the mitochondrion. It carries out the reaction (6R)-NADHX = (6S)-NADHX. The enzyme catalyses (6R)-NADPHX = (6S)-NADPHX. Catalyzes the epimerization of the S- and R-forms of NAD(P)HX, a damaged form of NAD(P)H that is a result of enzymatic or heat-dependent hydration. This is a prerequisite for the S-specific NAD(P)H-hydrate dehydratase to allow the repair of both epimers of NAD(P)HX. The protein is NAD(P)H-hydrate epimerase of Puccinia graminis f. sp. tritici (strain CRL 75-36-700-3 / race SCCL) (Black stem rust fungus).